The sequence spans 123 residues: UPF0102 protein PputGB1_4524 (123 aa).

It belongs to the UPF0102 family.

The chain is UPF0102 protein PputGB1_4524 from Pseudomonas putida (strain GB-1).